The sequence spans 256 residues: 3-deoxy-manno-octulosonate cytidylyltransferase (256 aa).

It belongs to the KdsB family.

Its subcellular location is the cytoplasm. It carries out the reaction 3-deoxy-alpha-D-manno-oct-2-ulosonate + CTP = CMP-3-deoxy-beta-D-manno-octulosonate + diphosphate. It participates in nucleotide-sugar biosynthesis; CMP-3-deoxy-D-manno-octulosonate biosynthesis; CMP-3-deoxy-D-manno-octulosonate from 3-deoxy-D-manno-octulosonate and CTP: step 1/1. Its pathway is bacterial outer membrane biogenesis; lipopolysaccharide biosynthesis. In terms of biological role, activates KDO (a required 8-carbon sugar) for incorporation into bacterial lipopolysaccharide in Gram-negative bacteria. This Histophilus somni (strain 2336) (Haemophilus somnus) protein is 3-deoxy-manno-octulosonate cytidylyltransferase.